Consider the following 290-residue polypeptide: Porphobilinogen deaminase (290 aa).

Cys-238 is subject to S-(dipyrrolylmethanemethyl)cysteine.

The protein belongs to the HMBS family. As to quaternary structure, monomer. It depends on dipyrromethane as a cofactor.

It catalyses the reaction 4 porphobilinogen + H2O = hydroxymethylbilane + 4 NH4(+). Its pathway is porphyrin-containing compound metabolism; protoporphyrin-IX biosynthesis; coproporphyrinogen-III from 5-aminolevulinate: step 2/4. Tetrapolymerization of the monopyrrole PBG into the hydroxymethylbilane pre-uroporphyrinogen in several discrete steps. This is Porphobilinogen deaminase from Caldicellulosiruptor saccharolyticus (strain ATCC 43494 / DSM 8903 / Tp8T 6331).